The sequence spans 103 residues: Putative septation protein SpoVG (103 aa).

The protein belongs to the SpoVG family.

In terms of biological role, could be involved in septation. In Exiguobacterium sibiricum (strain DSM 17290 / CCUG 55495 / CIP 109462 / JCM 13490 / 255-15), this protein is Putative septation protein SpoVG.